A 178-amino-acid polypeptide reads, in one-letter code: Cytochrome b6-f complex iron-sulfur subunit (178 aa).

The helical transmembrane segment at Leu-20–Met-42 threads the bilayer. In terms of domain architecture, Rieske spans Lys-65–Val-161. Residues Cys-107, His-109, Cys-125, and His-128 each coordinate [2Fe-2S] cluster. A disulfide bridge links Cys-112 with Cys-127.

This sequence belongs to the Rieske iron-sulfur protein family. The 4 large subunits of the cytochrome b6-f complex are cytochrome b6, subunit IV (17 kDa polypeptide, PetD), cytochrome f and the Rieske protein, while the 4 small subunits are PetG, PetL, PetM and PetN. The complex functions as a dimer. [2Fe-2S] cluster serves as cofactor.

The protein resides in the cellular thylakoid membrane. The catalysed reaction is 2 oxidized [plastocyanin] + a plastoquinol + 2 H(+)(in) = 2 reduced [plastocyanin] + a plastoquinone + 4 H(+)(out). In terms of biological role, component of the cytochrome b6-f complex, which mediates electron transfer between photosystem II (PSII) and photosystem I (PSI), cyclic electron flow around PSI, and state transitions. This is Cytochrome b6-f complex iron-sulfur subunit from Prochlorococcus marinus (strain MIT 9515).